The primary structure comprises 756 residues: MSKTILFLALFLSIVLNVQISFVVAESKVYVVYLGEKEHDNPESVTESHHQMLWSLLGSKEAVLDSIVYSYRHGFSGFAAKLTESQAQQISELPEVVQVIPNTLYEMTTTRTWDYLGVSPGNSDSLLQKANMGYNVIVGVIDSGVWPESEMFNDKGFGPIPSRWKGGCESGELFNASIHCNRKLIGAKYFVDGLVAEFGVVNRTQNPEYLSPRDFAGHGTHVASTIGGSFLPNVSYVGLGRGTARGGAPGVHIAVYKACWSGYCSGADVLKAMDEAIHDGVDILSLSLGPSVPLFPETEHTSVGAFHAVAKGIPVVIAAGNAGPTAQTISNVAPWVLTVAATTQDRSFPTAITLGNNITILGQAIYGGPELGFVGLTYPESPLSGDCEKLSANPNSTMEGKVVLCFAASTPSNAAIAAVINAGGLGLIMAKNPTHSLTPTRKFPWVSIDFELGTDILFYIRSTRSPIVKIQASKTLFGQSVSTKVATFSSRGPNSVSPAILKPDIAAPGVNILAAISPNSSINDGGFAMMSGTSMATPVVSGVVVLLKSLHPDWSPSAIKSAIVTTAWRTDPSGEPIFADGSSRKLADPFDYGGGLINPEKAVKPGLIYDMTTDDYVMYMCSVDYSDISISRVLGKITVCPNPKPSVLDLNLPSITIPNLRGEVTLTRTVTNVGPVNSVYKVVIDPPTGINVAVTPAELVFDYTTTKRSFTVRVSTTHKVNTGYYFGSLTWTDNMHNVAIPVSVRTQILQRYYDEN.

An N-terminal signal peptide occupies residues 1–25; the sequence is MSKTILFLALFLSIVLNVQISFVVA. The propeptide at 26–108 is activation peptide; it reads ESKVYVVYLG…VIPNTLYEMT (83 aa). One can recognise an Inhibitor I9 domain in the interval 29-106; that stretch reads VYVVYLGEKE…VQVIPNTLYE (78 aa). The 492-residue stretch at 112–603 folds into the Peptidase S8 domain; it reads TWDYLGVSPG…GGLINPEKAV (492 aa). The Charge relay system role is filled by Asp142. N-linked (GlcNAc...) asparagine glycosylation is found at Asn175 and Asn202. Residue His218 is the Charge relay system of the active site. Residues Asn233, Asn357, Asn395, and Asn519 are each glycosylated (N-linked (GlcNAc...) asparagine). The PA domain maps to 386–460; the sequence is DCEKLSANPN…ELGTDILFYI (75 aa). Ser534 functions as the Charge relay system in the catalytic mechanism.

It belongs to the peptidase S8 family.

Its subcellular location is the secreted. This Arabidopsis thaliana (Mouse-ear cress) protein is Subtilisin-like protease SBT3.9.